Here is a 268-residue protein sequence, read N- to C-terminus: Thiazole synthase (268 aa).

Residue Lys100 is the Schiff-base intermediate with DXP of the active site. 1-deoxy-D-xylulose 5-phosphate is bound by residues Gly161, Ala187–Gly188, and Asn209–Thr210. The disordered stretch occupies residues Ala248–Ser268. Polar residues predominate over residues Thr259–Ser268.

It belongs to the ThiG family. As to quaternary structure, homotetramer. Forms heterodimers with either ThiH or ThiS.

The protein resides in the cytoplasm. The enzyme catalyses [ThiS sulfur-carrier protein]-C-terminal-Gly-aminoethanethioate + 2-iminoacetate + 1-deoxy-D-xylulose 5-phosphate = [ThiS sulfur-carrier protein]-C-terminal Gly-Gly + 2-[(2R,5Z)-2-carboxy-4-methylthiazol-5(2H)-ylidene]ethyl phosphate + 2 H2O + H(+). It functions in the pathway cofactor biosynthesis; thiamine diphosphate biosynthesis. In terms of biological role, catalyzes the rearrangement of 1-deoxy-D-xylulose 5-phosphate (DXP) to produce the thiazole phosphate moiety of thiamine. Sulfur is provided by the thiocarboxylate moiety of the carrier protein ThiS. In vitro, sulfur can be provided by H(2)S. The chain is Thiazole synthase from Nitrosomonas europaea (strain ATCC 19718 / CIP 103999 / KCTC 2705 / NBRC 14298).